The sequence spans 243 residues: Probable flavin-dependent thymidylate synthase (243 aa).

One can recognise a ThyX domain in the interval 21–239; the sequence is FEVDDFEESK…PNTYQDIPDV (219 aa). FAD is bound by residues serine 80 and 103-105; that span reads RHR. Residues 100-103, 113-115, and arginine 178 contribute to the dUMP site; these read ELER and SQR. Positions 103–113 match the ThyX motif motif; it reads RHRHLSFSVVS. 194–196 contributes to the FAD binding site; that stretch reads NHR. Arginine 205 lines the dUMP pocket. The active-site Involved in ionization of N3 of dUMP, leading to its activation is the arginine 205.

The protein belongs to the thymidylate synthase ThyX family. In terms of assembly, homotetramer. Requires FAD as cofactor.

The catalysed reaction is dUMP + (6R)-5,10-methylene-5,6,7,8-tetrahydrofolate + NADPH + H(+) = dTMP + (6S)-5,6,7,8-tetrahydrofolate + NADP(+). It functions in the pathway pyrimidine metabolism; dTTP biosynthesis. In terms of biological role, catalyzes the reductive methylation of 2'-deoxyuridine-5'-monophosphate (dUMP) to 2'-deoxythymidine-5'-monophosphate (dTMP) while utilizing 5,10-methylenetetrahydrofolate (mTHF) as the methyl donor, and NADPH and FADH(2) as the reductant. This is Probable flavin-dependent thymidylate synthase (48) from Mycobacterium phage L5 (Mycobacteriophage L5).